Reading from the N-terminus, the 154-residue chain is Iron-sulfur cluster assembly enzyme IscU (154 aa).

This sequence belongs to the NifU family. Component of the mitochondrial core iron-sulfur cluster (ISC) assembly complex at least composed of the cystein desulfurase Nfs1, the scaffold protein IscU, the accessory protein bcn92/Isd11/Lyrm4, and probably fh/frataxin. Interacts with Nfs1. Requires Fe(2+) as cofactor. [2Fe-2S] cluster serves as cofactor.

Its pathway is cofactor biosynthesis; iron-sulfur cluster biosynthesis. Functionally, scaffold protein for the de novo synthesis of iron-sulfur (Fe-S) clusters within mitochondria, which is required for maturation of both mitochondrial and cytoplasmic [2Fe-2S] and [4Fe-4S] proteins. Component of the mitochondrial core iron-sulfur cluster (ISC) assembly complex; regulates its activity. This is Iron-sulfur cluster assembly enzyme IscU from Drosophila melanogaster (Fruit fly).